Here is a 302-residue protein sequence, read N- to C-terminus: Protein NEOXANTHIN-DEFICIENT 1 (302 aa).

In terms of biological role, required for neoxanthin biosynthesis. Probably not involved directly in the enzymatic conversion of violaxanthin to neoxanthin. Is necessary but not sufficient for neoxanthin synthesis. In Oryza sativa subsp. japonica (Rice), this protein is Protein NEOXANTHIN-DEFICIENT 1.